The following is a 757-amino-acid chain: Cellulose synthase-like protein B2 (757 aa).

2 consecutive transmembrane segments (helical) span residues 24–44 and 48–68; these read AVDL…ILYM and GIIW…WLLS. Catalysis depends on residues Asp136 and Asp461. The next 6 membrane-spanning stretches (helical) occupy residues 533 to 555, 568 to 588, 607 to 627, 672 to 692, 704 to 724, and 735 to 755; these read AYLC…LPAY, LCLG…LWEF, IVAT…LLGL, FLPG…VFVG, GSGL…FPFL, and IPLS…VFSV.

This sequence belongs to the glycosyltransferase 2 family. Plant cellulose synthase-like B subfamily. Expressed in young seedlings, primarily in the root vascular tissue.

It localises to the golgi apparatus membrane. Its function is as follows. Thought to be a Golgi-localized beta-glycan synthase that polymerize the backbones of noncellulosic polysaccharides (hemicelluloses) of plant cell wall. The chain is Cellulose synthase-like protein B2 (CSLB2) from Arabidopsis thaliana (Mouse-ear cress).